The sequence spans 1165 residues: Leptin receptor (1165 aa).

The first 21 residues, 1 to 21, serve as a signal peptide directing secretion; sequence MTCPKFSVALLHWEFIYVITA. Topologically, residues 22-838 are extracellular; that stretch reads FDLAYPITPW…TQDGEKHRND (817 aa). Intrachain disulfides connect cysteine 37/cysteine 90, cysteine 89/cysteine 99, cysteine 131/cysteine 142, cysteine 186/cysteine 196, and cysteine 188/cysteine 193. Residues asparagine 41, asparagine 55, asparagine 72, asparagine 80, and asparagine 98 are each glycosylated (N-linked (GlcNAc...) asparagine). Asparagine 187 carries N-linked (GlcNAc...) asparagine glycosylation. 4 N-linked (GlcNAc...) asparagine glycosylation sites follow: asparagine 206, asparagine 276, asparagine 347, and asparagine 397. The Fibronectin type-III 1 domain maps to 239–332; the sequence is PPLGLHMEIT…STPFTFTTQD (94 aa). 2 cysteine pairs are disulfide-bonded: cysteine 352–cysteine 412 and cysteine 413–cysteine 418. Asparagine 433 is a glycosylation site (N-linked (GlcNAc...) asparagine). 3 disulfides stabilise this stretch: cysteine 436-cysteine 447, cysteine 473-cysteine 528, and cysteine 488-cysteine 498. The segment at 467–484 is leptin-binding; the sequence is HRSSLYCSDVPSVHPISE. 3 consecutive Fibronectin type-III domains span residues 539–634, 642–736, and 740–834; these read PPSS…TVVT, GPEF…WPMS, and IVQS…DGEK. The WSXWS motif signature appears at 622 to 626; sequence WSNWS. N-linked (GlcNAc...) asparagine glycans are attached at residues asparagine 624, asparagine 659, asparagine 670, asparagine 697, asparagine 728, and asparagine 750. Residues 839–861 form a helical membrane-spanning segment; that stretch reads AGLYVIVPIIISSSILLLGTLLM. Residues 862-1165 are Cytoplasmic-facing; that stretch reads SHQRMKKLFW…MENKMYDLTV (304 aa). The Box 1 motif signature appears at 870–878; sequence FWEDVPNPK. At serine 881 the chain carries Phosphoserine. The tract at residues 892 to 897 is required for JAK2 activation; it reads ETFEHL. The interval 897-905 is required for STAT3 phosphorylation; the sequence is LFIKHTESV. A Phosphotyrosine; by JAK2 modification is found at tyrosine 986. Tyrosine 1079 bears the Phosphotyrosine mark. A Phosphotyrosine; by JAK2 modification is found at tyrosine 1141.

Belongs to the type I cytokine receptor family. Type 2 subfamily. As to quaternary structure, present as a mixture of monomers and dimers. The phosphorylated receptor binds a number of SH2 domain-containing proteins such as JAK2, STAT3, PTPN11, and SOCS3. Interaction with SOCS3 inhibits JAK/STAT signaling and MAPK cascade. Post-translationally, on ligand binding, phosphorylated on two conserved C-terminal tyrosine residues by JAK2. Tyr-986 is required for complete binding and activation of PTPN11, ERK/FOS activation,for interaction with SOCS3 and SOCS3 mediated inhibition of leptin signaling. Phosphorylation on Tyr-1141 is required for STAT3 binding/activation. Phosphorylation of Tyr-1079 has a more accessory role. As to expression, kidney, liver, spleen, lung, brain, testis, uterus, ovary, corpus luteum, theca and granulosa cells.

The protein localises to the cell membrane. It is found in the basolateral cell membrane. Functionally, receptor for hormone LEP/leptin. On ligand binding, mediates LEP central and peripheral effects through the activation of different signaling pathways such as JAK2/STAT3 and MAPK cascade/FOS. In the hypothalamus, LEP acts as an appetite-regulating factor that induces a decrease in food intake and an increase in energy consumption by inducing anorexinogenic factors and suppressing orexigenic neuropeptides, also regulates bone mass and secretion of hypothalamo-pituitary-adrenal hormones. In the periphery, increases basal metabolism, influences reproductive function, regulates pancreatic beta-cell function and insulin secretion, is pro-angiogenic and affects innate and adaptive immunity. Control of energy homeostasis and melanocortin production (stimulation of POMC and full repression of AgRP transcription) is mediated by STAT3 signaling, whereas distinct signals regulate NPY and the control of fertility, growth and glucose homeostasis. Involved in the regulation of counter-regulatory response to hypoglycemia by inhibiting neurons of the parabrachial nucleus. Has a specific effect on T lymphocyte responses, differentially regulating the proliferation of naive and memory T-cells. Leptin increases Th1 and suppresses Th2 cytokine production. The polypeptide is Leptin receptor (LEPR) (Sus scrofa (Pig)).